Reading from the N-terminus, the 292-residue chain is MASMAGPDHLFNLRNHFYLGAYQAAINNSEIPNLSQEDIVERDCLVHRAYIALGSYQLVISEIDEAAATPLQAVKLLAMYLSSPENKESTISSLREWLADPTVGNNAIIRLIAGTIFMHEEDYNEALKHTHSGGTMDLHALNVQIFIKMHRSDFAEKQLRVMQQIDEDHTLTQLASAWLNLAVGGSKIQEAYLIFQDFSEKYPMTSLILNGKAVCCMHMGNFEEAETLLLEALNKDAKDPETLANLVVCSLHVGKSSSRYLNQLKLSHPEHVLVKRAASAEDNFERALQSFA.

Belongs to the COPE family. In terms of assembly, oligomeric complex that consists of at least the alpha, beta, beta', gamma, delta, epsilon and zeta subunits.

Its subcellular location is the cytoplasm. It localises to the golgi apparatus membrane. It is found in the cytoplasmic vesicle. The protein localises to the COPI-coated vesicle membrane. Functionally, the coatomer is a cytosolic protein complex that binds to dilysine motifs and reversibly associates with Golgi non-clathrin-coated vesicles, which further mediate biosynthetic protein transport from the ER, via the Golgi up to the trans Golgi network. The coatomer complex is required for budding from Golgi membranes, and is essential for the retrograde Golgi-to-ER transport of dilysine-tagged proteins. The polypeptide is Coatomer subunit epsilon-1 (Arabidopsis thaliana (Mouse-ear cress)).